The sequence spans 128 residues: MQRHMLKSKIHRAAVTHCELHYEGSCAIDEDLLEAANIVENERIDIWNVNNGERFSTYAIKGERGSGMISLNGSAARRAQLGDLVIIAAFAMIDEQELKAGWKPDLVFVDEDNKIKGSRDHVPTQNWT.

Serine 25 serves as the catalytic Schiff-base intermediate with substrate; via pyruvic acid. Position 25 is a pyruvic acid (Ser) (serine 25). Threonine 57 contributes to the substrate binding site. Tyrosine 58 functions as the Proton donor in the catalytic mechanism. 73–75 (GSA) contacts substrate.

The protein belongs to the PanD family. Heterooctamer of four alpha and four beta subunits. Pyruvate is required as a cofactor. In terms of processing, is synthesized initially as an inactive proenzyme, which is activated by self-cleavage at a specific serine bond to produce a beta-subunit with a hydroxyl group at its C-terminus and an alpha-subunit with a pyruvoyl group at its N-terminus.

The protein resides in the cytoplasm. The catalysed reaction is L-aspartate + H(+) = beta-alanine + CO2. It participates in cofactor biosynthesis; (R)-pantothenate biosynthesis; beta-alanine from L-aspartate: step 1/1. In terms of biological role, catalyzes the pyruvoyl-dependent decarboxylation of aspartate to produce beta-alanine. This is Aspartate 1-decarboxylase from Burkholderia mallei (strain NCTC 10247).